Reading from the N-terminus, the 173-residue chain is MVTAASEMELFLPKSYDIFWSLVILIIVAVFFYKFFLPKFQAVFDERAAKIEGGIAKAEQAQKDADEAKAKYDAQLSNARVEASKIRDDARAEASHIIADARTRAEADAAQITATAQRSIESQQQQALVSLKGEVGVLATALAGKILGSKLESDDVQSTMIDQMIAELDSDKK.

A helical transmembrane segment spans residues 18–38 (IFWSLVILIIVAVFFYKFFLP).

Belongs to the ATPase B chain family. As to quaternary structure, F-type ATPases have 2 components, F(1) - the catalytic core - and F(0) - the membrane proton channel. F(1) has five subunits: alpha(3), beta(3), gamma(1), delta(1), epsilon(1). F(0) has three main subunits: a(1), b(2) and c(10-14). The alpha and beta chains form an alternating ring which encloses part of the gamma chain. F(1) is attached to F(0) by a central stalk formed by the gamma and epsilon chains, while a peripheral stalk is formed by the delta and b chains.

The protein localises to the cell membrane. Functionally, f(1)F(0) ATP synthase produces ATP from ADP in the presence of a proton or sodium gradient. F-type ATPases consist of two structural domains, F(1) containing the extramembraneous catalytic core and F(0) containing the membrane proton channel, linked together by a central stalk and a peripheral stalk. During catalysis, ATP synthesis in the catalytic domain of F(1) is coupled via a rotary mechanism of the central stalk subunits to proton translocation. Its function is as follows. Component of the F(0) channel, it forms part of the peripheral stalk, linking F(1) to F(0). The chain is ATP synthase subunit b from Bifidobacterium adolescentis (strain ATCC 15703 / DSM 20083 / NCTC 11814 / E194a).